The primary structure comprises 85 residues: U4-theraphotoxin-Hhn1a (85 aa).

The N-terminal stretch at 1 to 22 (MKVTLIAILTCAAVLVLRTTAA) is a signal peptide. Residues 23-48 (EELEAESQLMEVGMPDTELAAVDEER) constitute a propeptide that is removed on maturation. Cystine bridges form between cysteine 52/cysteine 66, cysteine 56/cysteine 77, and cysteine 71/cysteine 82.

The protein belongs to the neurotoxin 12 (Hwtx-2) family. 02 (Hwtx-2) subfamily. Monomer. Expressed by the venom gland.

It localises to the secreted. Functionally, neurotoxin active on both insects and mammals. The sequence is that of U4-theraphotoxin-Hhn1a from Cyriopagopus hainanus (Chinese bird spider).